Reading from the N-terminus, the 205-residue chain is Ribonuclease HII (205 aa).

The RNase H type-2 domain occupies 16 to 205 (VSEVGIDEVG…KSFLNQSDLI (190 aa)). Positions 22, 23, and 118 each coordinate a divalent metal cation.

Belongs to the RNase HII family. Mn(2+) serves as cofactor. The cofactor is Mg(2+).

Its subcellular location is the cytoplasm. It carries out the reaction Endonucleolytic cleavage to 5'-phosphomonoester.. Its function is as follows. Endonuclease that specifically degrades the RNA of RNA-DNA hybrids. The sequence is that of Ribonuclease HII from Prochlorococcus marinus (strain MIT 9312).